A 370-amino-acid chain; its full sequence is L-lactate oxidase (370 aa).

Residues 8–367 (DPDGMPVTLS…TPDLLTGFSG (360 aa)) enclose the FMN hydroxy acid dehydrogenase domain. A pyruvate-binding site is contributed by Y34. Residues 87 to 89 (PMA), S116, and Q136 each bind FMN. Position 138 (Y138) interacts with pyruvate. Residue T164 coordinates FMN. R173 lines the pyruvate pocket. FMN contacts are provided by K238 and S260. Pyruvate is bound by residues H262 and R265. The active-site Proton acceptor is H262. FMN-binding positions include 293 to 297 (DGGIR) and R317.

This sequence belongs to the FMN-dependent alpha-hydroxy acid dehydrogenase family. As to quaternary structure, homotetramer. The cofactor is FMN.

The enzyme catalyses (S)-lactate + O2 = pyruvate + H2O2. It catalyses the reaction a (2S)-2-hydroxycarboxylate + O2 = a 2-oxocarboxylate + H2O2. The catalysed reaction is glycolate + O2 = glyoxylate + H2O2. It carries out the reaction 2-hydroxyoctadecanoate + O2 = 2-oxooctadecanoate + H2O2. In terms of biological role, catalyzes the oxidation of (S)-lactate (L-lactate) to pyruvate, with a reduction of O2 to H2O2. Is also able to use glycolate and to a lesser extent 2-hydroxyoctadecanoate as substrate. The polypeptide is L-lactate oxidase (Roseobacter sp. (strain GAI101)).